The primary structure comprises 512 residues: Kynurenine 3-monooxygenase (512 aa).

It belongs to the aromatic-ring hydroxylase family. KMO subfamily. Requires FAD as cofactor.

It is found in the mitochondrion outer membrane. It carries out the reaction L-kynurenine + NADPH + O2 + H(+) = 3-hydroxy-L-kynurenine + NADP(+) + H2O. It functions in the pathway cofactor biosynthesis; NAD(+) biosynthesis; quinolinate from L-kynurenine: step 1/3. In terms of biological role, catalyzes the hydroxylation of L-kynurenine (L-Kyn) to form 3-hydroxy-L-kynurenine (L-3OHKyn). Required for synthesis of quinolinic acid. In Neurospora crassa (strain ATCC 24698 / 74-OR23-1A / CBS 708.71 / DSM 1257 / FGSC 987), this protein is Kynurenine 3-monooxygenase (nic-3).